The primary structure comprises 350 residues: Chorismate synthase (350 aa).

Residues arginine 39 and arginine 45 each coordinate NADP(+). The interval 85–104 is disordered; it reads KDKKVPPVTRPRPGHADLPG. FMN contacts are provided by residues 119–121, 213–214, glycine 258, 273–277, and arginine 299; these read RAS, QG, and KPIPT.

The protein belongs to the chorismate synthase family. As to quaternary structure, homotetramer. FMNH2 is required as a cofactor.

The catalysed reaction is 5-O-(1-carboxyvinyl)-3-phosphoshikimate = chorismate + phosphate. Its pathway is metabolic intermediate biosynthesis; chorismate biosynthesis; chorismate from D-erythrose 4-phosphate and phosphoenolpyruvate: step 7/7. Catalyzes the anti-1,4-elimination of the C-3 phosphate and the C-6 proR hydrogen from 5-enolpyruvylshikimate-3-phosphate (EPSP) to yield chorismate, which is the branch point compound that serves as the starting substrate for the three terminal pathways of aromatic amino acid biosynthesis. This reaction introduces a second double bond into the aromatic ring system. In Caldanaerobacter subterraneus subsp. tengcongensis (strain DSM 15242 / JCM 11007 / NBRC 100824 / MB4) (Thermoanaerobacter tengcongensis), this protein is Chorismate synthase.